A 367-amino-acid chain; its full sequence is Peptide chain release factor 2 (367 aa).

An N5-methylglutamine modification is found at Gln254.

The protein belongs to the prokaryotic/mitochondrial release factor family. Post-translationally, methylated by PrmC. Methylation increases the termination efficiency of RF2.

It localises to the cytoplasm. Peptide chain release factor 2 directs the termination of translation in response to the peptide chain termination codons UGA and UAA. This is Peptide chain release factor 2 from Variovorax paradoxus (strain S110).